A 319-amino-acid chain; its full sequence is Large ribosomal subunit protein eL8 (319 aa).

The residue at position 87 (K87) is an N6-acetyllysine. A Glycyl lysine isopeptide (Lys-Gly) (interchain with G-Cter in SUMO2) cross-link involves residue K101. At K150 the chain carries N6-acetyllysine; alternate. Residue K150 forms a Glycyl lysine isopeptide (Lys-Gly) (interchain with G-Cter in SUMO2); alternate linkage. A Glycyl lysine isopeptide (Lys-Gly) (interchain with G-Cter in SUMO2) cross-link involves residue K178. An N6-acetyllysine modification is found at K270. K298 is covalently cross-linked (Glycyl lysine isopeptide (Lys-Gly) (interchain with G-Cter in SUMO2)).

Belongs to the eukaryotic ribosomal protein eL8 family. In terms of assembly, component of the large ribosomal subunit. Interacts with CRY1. Interacts with DICER1, AGO2, TARBP2, MOV10 and EIF6; they form a large RNA-induced silencing complex (RISC).

Its subcellular location is the cytoplasm. Functionally, component of the large ribosomal subunit. The ribosome is a large ribonucleoprotein complex responsible for the synthesis of proteins in the cell. The chain is Large ribosomal subunit protein eL8 (RPL7A) from Oryctolagus cuniculus (Rabbit).